Consider the following 232-residue polypeptide: 2-C-methyl-D-erythritol 4-phosphate cytidylyltransferase (232 aa).

This sequence belongs to the IspD/TarI cytidylyltransferase family. IspD subfamily.

It catalyses the reaction 2-C-methyl-D-erythritol 4-phosphate + CTP + H(+) = 4-CDP-2-C-methyl-D-erythritol + diphosphate. It functions in the pathway isoprenoid biosynthesis; isopentenyl diphosphate biosynthesis via DXP pathway; isopentenyl diphosphate from 1-deoxy-D-xylulose 5-phosphate: step 2/6. In terms of biological role, catalyzes the formation of 4-diphosphocytidyl-2-C-methyl-D-erythritol from CTP and 2-C-methyl-D-erythritol 4-phosphate (MEP). In Synechococcus elongatus (strain ATCC 33912 / PCC 7942 / FACHB-805) (Anacystis nidulans R2), this protein is 2-C-methyl-D-erythritol 4-phosphate cytidylyltransferase.